The sequence spans 315 residues: Probable cytochrome c oxidase subunit 2 (315 aa).

The RPE1 insert domain maps to 6–53; sequence RHLSKPAYREEFKGDTSPRTAAYISNRADASLGSTYKLPLEAKFWKMS. A run of 3 helical transmembrane segments spans residues 41–61, 96–116, and 133–153; these read YKLP…CFLI, LLYI…FVCI, and VLIE…IAVP. Residues His-235, Cys-270, Cys-274, and His-278 each contribute to the Cu cation site.

The protein belongs to the cytochrome c oxidase subunit 2 family. The cofactor is Cu cation. It depends on heme as a cofactor.

The protein resides in the cell membrane. The enzyme catalyses 4 Fe(II)-[cytochrome c] + O2 + 8 H(+)(in) = 4 Fe(III)-[cytochrome c] + 2 H2O + 4 H(+)(out). Its function is as follows. Subunits I and II form the functional core of the enzyme complex. Electrons originating in cytochrome c are transferred via heme a and Cu(A) to the binuclear center formed by heme a3 and Cu(B). In Rickettsia felis (strain ATCC VR-1525 / URRWXCal2) (Rickettsia azadi), this protein is Probable cytochrome c oxidase subunit 2 (ctaC).